A 201-amino-acid chain; its full sequence is 3-isopropylmalate dehydratase small subunit (201 aa).

This sequence belongs to the LeuD family. LeuD type 1 subfamily. Heterodimer of LeuC and LeuD.

It catalyses the reaction (2R,3S)-3-isopropylmalate = (2S)-2-isopropylmalate. Its pathway is amino-acid biosynthesis; L-leucine biosynthesis; L-leucine from 3-methyl-2-oxobutanoate: step 2/4. Functionally, catalyzes the isomerization between 2-isopropylmalate and 3-isopropylmalate, via the formation of 2-isopropylmaleate. The chain is 3-isopropylmalate dehydratase small subunit from Buchnera aphidicola subsp. Baizongia pistaciae (strain Bp).